We begin with the raw amino-acid sequence, 330 residues long: MTAETIQTDRIPPHLRPAMQALAEAGARLAAIIRRGGDLAQPVGTNADGDGQKALDVIADDLFCQTLAGAGVRWLASEEQEQAVALDPEGTLAVAIDPLDGSSNIDTNVSIGTIFSIYPAEATAEASFLRPARQQIGAGYIIYGPRCAMMVTFGDGVQHYALDPEDDAFRLVATRRQMPDCALEFAINASNYRHWPQPIRAYIDDCLAGSDGPREQNFNMRWIASLVAETHRILVRGGVFLYPSDARKGYEHGRLRMLYECAPIAFLIEQAGGGATDGRTAILEQGAPTLHQRTPFVFGSAEKVARIAAYHELPETEVSALFGHRGLFRA.

Mg(2+) contacts are provided by glutamate 78, aspartate 97, leucine 99, and aspartate 100. Substrate is bound by residues 100-103 (DGSS) and asparagine 188. Mg(2+) is bound at residue glutamate 260.

It belongs to the FBPase class 1 family. Homotetramer. Mg(2+) serves as cofactor.

It is found in the cytoplasm. The enzyme catalyses beta-D-fructose 1,6-bisphosphate + H2O = beta-D-fructose 6-phosphate + phosphate. Its pathway is carbohydrate biosynthesis; gluconeogenesis. The polypeptide is Fructose-1,6-bisphosphatase class 1 (Paracoccus denitrificans (strain Pd 1222)).